The primary structure comprises 359 residues: Histidinol-phosphate aminotransferase (359 aa).

At lysine 217 the chain carries N6-(pyridoxal phosphate)lysine.

Belongs to the class-II pyridoxal-phosphate-dependent aminotransferase family. Histidinol-phosphate aminotransferase subfamily. Homodimer. Pyridoxal 5'-phosphate serves as cofactor.

It catalyses the reaction L-histidinol phosphate + 2-oxoglutarate = 3-(imidazol-4-yl)-2-oxopropyl phosphate + L-glutamate. The protein operates within amino-acid biosynthesis; L-histidine biosynthesis; L-histidine from 5-phospho-alpha-D-ribose 1-diphosphate: step 7/9. This is Histidinol-phosphate aminotransferase from Salmonella newport (strain SL254).